Consider the following 384-residue polypeptide: H-2 class I histocompatibility antigen, TLA(B) alpha chain (384 aa).

An N-terminal signal peptide occupies residues 1 to 26 (MRMGTPVPGTLLILLAASQGQTQTCP). The segment at 27 to 116 (GSHSLRYFYT…MLDYYNLSQN (90 aa)) is alpha-1. The Extracellular segment spans residues 27–314 (GSHSLRYFYT…TSMPNRTTVR (288 aa)). Asn-63, Asn-112, and Asn-116 each carry an N-linked (GlcNAc...) asparagine glycan. The segment at 117-208 (GSHTIQVMYG…ENRKKTQECT (92 aa)) is alpha-2. Intrachain disulfides connect Cys-127–Cys-190 and Cys-229–Cys-285. The interval 209–300 (DPPKTHVTHH…GLPEPLTLRW (92 aa)) is alpha-3. One can recognise an Ig-like C1-type domain in the interval 211–299 (PKTHVTHHPR…EGLPEPLTLR (89 aa)). The connecting peptide stretch occupies residues 301–314 (EPPQTSMPNRTTVR). Asn-309 carries an N-linked (GlcNAc...) asparagine glycan. The helical transmembrane segment at 315–334 (ALLGAMIILGFMSGSVMMWM) threads the bilayer. Topologically, residues 335–384 (RKNNGGNGDDNTAAYQNEREHLSLDPRAESEALGVEAGMKDLPSAPPLVS) are cytoplasmic. Positions 354 to 364 (EHLSLDPRAES) are enriched in basic and acidic residues. The segment at 354-384 (EHLSLDPRAESEALGVEAGMKDLPSAPPLVS) is disordered.

This sequence belongs to the MHC class I family. As to quaternary structure, heterodimer of an alpha chain and a beta chain (beta-2-microglobulin). As to expression, TL antigens are only expressed on thymocytes, activated T-lymphocytes and on some thymic leukemias.

Its subcellular location is the membrane. Involved in the presentation of foreign antigens to the immune system. The polypeptide is H-2 class I histocompatibility antigen, TLA(B) alpha chain (H2-T3) (Mus musculus (Mouse)).